Reading from the N-terminus, the 1081-residue chain is Cellulose synthase A catalytic subunit 1 [UDP-forming] (1081 aa).

Residue Met-1 is modified to N-acetylmethionine. Residues 1-270 are Cytoplasmic-facing; sequence MEASAGLVAG…SRVVPIPSSR (270 aa). Residues Cys-39, Cys-42, Cys-58, Cys-61, Cys-66, Cys-69, Cys-81, and Cys-84 each contribute to the Zn(2+) site. Residues 39–85 form an RING-type; degenerate zinc finger; that stretch reads CQICGDDVGLAETGDVFVACNECAFPVCRPCYEYERKDGTQCCPQCK. Residues 118-195 are disordered; it reads GANKARHQRH…RQPVPVRIVD (78 aa). The segment covering 127-139 has biased composition (basic and acidic residues); that stretch reads HGEEFSSSSRHES. Polar residues predominate over residues 158 to 168; that stretch reads PDTQSVRTTSG. A helical transmembrane segment spans residues 271-291; the sequence is LTPYRVVIILRLIILCFFLQY. At 292–299 the chain is on the extracellular side; it reads RTTHPVKN. A helical membrane pass occupies residues 300–320; the sequence is AYPLWLTSVICEIWFAFSWLL. The Cytoplasmic portion of the chain corresponds to 321–856; it reads DQFPKWYPIN…LLERIAYINT (536 aa). UDP-alpha-D-glucose is bound by residues Ser-359, Lys-365, Glu-366, and Asp-395. Asp-395 is a catalytic residue. Residues 449–476 adopt a coiled-coil conformation; sequence VKERRAMKREYEEFKVRINALVAKAQKI. Lys-536 lines the UDP-alpha-D-glucose pocket. Mn(2+)-binding residues include Lys-537 and Asp-561. Asp-780 is an active-site residue. A helical transmembrane segment spans residues 857-877; that stretch reads IVYPITSIPLIAYCILPAFCL. Over 878–889 the chain is Extracellular; sequence ITDRFIIPEISN. The chain crosses the membrane as a helical span at residues 890-910; it reads YASIWFILLFISIAVTGILEL. At 911 to 925 the chain is on the cytoplasmic side; the sequence is RWSGVSIEDWWRNEQ. A helical membrane pass occupies residues 926-946; it reads FWVIGGTSAHLFAVFQGLLKV. Residues 947–976 are Extracellular-facing; sequence LAGIDTNFTVTSKATDEDGDFAELYIFKWT. The N-linked (GlcNAc...) asparagine glycan is linked to Asn-953. The helical transmembrane segment at 977 to 997 threads the bilayer; sequence ALLIPPTTVLLVNLIGIVAGV. Residues 998-1008 lie on the Cytoplasmic side of the membrane; it reads SYAVNSGYQSW. The chain crosses the membrane as a helical span at residues 1009–1029; the sequence is GPLFGKLFFALWVIAHLYPFL. Over 1030 to 1038 the chain is Extracellular; the sequence is KGLLGRQNR. A helical transmembrane segment spans residues 1039–1059; that stretch reads TPTIVIVWSVLLASIFSLLWV. The Cytoplasmic segment spans residues 1060–1081; sequence RINPFVDANPNANNFNGKGGVF.

The protein belongs to the glycosyltransferase 2 family. Plant cellulose synthase subfamily. Interacts with CESA3 and CESA6. Assembly with CESA3 and CESA6 is required for functional complex in primary cell wall cellulose synthesis. Interacts with STL1 and STL2, but not with GOT1. Binds to CSI1. Interacts with PAT24/TIP1. Zn(2+) is required as a cofactor. The cofactor is Mn(2+). S-acylated. In terms of tissue distribution, expressed in germinating seeds, seedlings, roots, stems, shoots leaves and flowers, but not in mature flowers.

It localises to the cell membrane. The enzyme catalyses [(1-&gt;4)-beta-D-glucosyl](n) + UDP-alpha-D-glucose = [(1-&gt;4)-beta-D-glucosyl](n+1) + UDP + H(+). The protein operates within glycan metabolism; plant cellulose biosynthesis. Catalytic subunit of cellulose synthase terminal complexes ('rosettes'), required for beta-1,4-glucan microfibril crystallization, a major mechanism of the cell wall formation. Involved in the primary cell wall formation. Required during embryogenesis for cell elongation, orientation of cell expansion and complex cell wall formations, such as interdigitated pattern of epidermal pavement cells, stomatal guard cells and trichomes. Plays a role in lateral roots formation, but seems not necessary for the development of tip-growing cells such as root hairs. The presence of each protein CESA1 and CESA6 is critical for cell expansion after germination. This chain is Cellulose synthase A catalytic subunit 1 [UDP-forming], found in Arabidopsis thaliana (Mouse-ear cress).